The following is a 457-amino-acid chain: Glutamate--tRNA ligase 1 (457 aa).

The 'HIGH' region motif lies at 9–19 (PSPTGYIHIGN). Positions 250–254 (GLSKR) match the 'KMSKS' region motif. Residue lysine 253 coordinates ATP.

It belongs to the class-I aminoacyl-tRNA synthetase family. Glutamate--tRNA ligase type 1 subfamily. As to quaternary structure, monomer.

The protein resides in the cytoplasm. The catalysed reaction is tRNA(Glu) + L-glutamate + ATP = L-glutamyl-tRNA(Glu) + AMP + diphosphate. Catalyzes the attachment of glutamate to tRNA(Glu) in a two-step reaction: glutamate is first activated by ATP to form Glu-AMP and then transferred to the acceptor end of tRNA(Glu). The polypeptide is Glutamate--tRNA ligase 1 (Brucella abortus (strain S19)).